We begin with the raw amino-acid sequence, 89 residues long: MSLSTEATAKIVSEFGRDANDTGSTEVQVALLTAQINHLQGHFAEHKKDHHSRRGLLRMVSQRRKLLDYLKRKDVARYTRLIERLGLRR.

It belongs to the universal ribosomal protein uS15 family. In terms of assembly, part of the 30S ribosomal subunit. Forms a bridge to the 50S subunit in the 70S ribosome, contacting the 23S rRNA.

Its function is as follows. One of the primary rRNA binding proteins, it binds directly to 16S rRNA where it helps nucleate assembly of the platform of the 30S subunit by binding and bridging several RNA helices of the 16S rRNA. Functionally, forms an intersubunit bridge (bridge B4) with the 23S rRNA of the 50S subunit in the ribosome. The chain is Small ribosomal subunit protein uS15 from Escherichia coli O157:H7.